Consider the following 1707-residue polypeptide: Kinesin-like protein KIF1A (1707 aa).

Residues serine 5 to isoleucine 354 form the Kinesin motor domain. Glycine 102, lysine 103, serine 104, tyrosine 105, and serine 215 together coordinate ATP. Serine 104 is a Mg(2+) binding site. Positions serine 439–arginine 466 form a coiled coil. An FHA domain is found at threonine 525–valine 581. 2 coiled-coil regions span residues glutamate 637–glutamine 671 and leucine 811–valine 831. Positions glutamine 657–arginine 1105 are required for interaction with CALM1, PPFIA2 and TANC2. 2 disordered regions span residues proline 1424–asparagine 1462 and threonine 1536–proline 1576. Positions leucine 1429–glycine 1453 are enriched in low complexity. One can recognise a PH domain in the interval isoleucine 1592–alanine 1690.

This sequence belongs to the TRAFAC class myosin-kinesin ATPase superfamily. Kinesin family. Unc-104 subfamily. As to quaternary structure, dimeric motor; dimerization is required for ATP-driven processive motility. Monomer in vitro. Interacts with PPFIA1 and PPFIA4. Interacts with CALM1; the interaction is increased in presence of calcium and increases neuronal dense core vesicles motility. Interacts with PPFIA2 and TANC2; both interactions allow the recruitment of neuronal dense core vesicles to dendritic spines and decrease in presence of calcium. Interacts with SYT4 (unphosphorylated) and SYT11; both interactions increase in presence of calcium. Interacts with MADD.

It is found in the cytoplasm. Its subcellular location is the cytoskeleton. It localises to the cell projection. The protein localises to the neuron projection. The protein resides in the axon. It is found in the perinuclear region. Its subcellular location is the synapse. It localises to the cytoplasmic vesicle. The protein localises to the secretory vesicle. The protein resides in the neuronal dense core vesicle membrane. It catalyses the reaction ATP + H2O + a kinesin associated with a microtubule at position (n) = ADP + phosphate a kinesin associated with a microtubule at position (n+1, toward the plus end).. Its function is as follows. Kinesin motor with a plus-end-directed microtubule motor activity, involved in anterograde axonal transport of synaptic vesicle precursors. Also required for neuronal dense core vesicles (DCVs) transport to the dendritic spines and axons. The interaction calcium-dependent with CALM1 increases vesicle motility and interaction with the scaffolding proteins PPFIA2 and TANC2 recruits DCVs to synaptic sites. The polypeptide is Kinesin-like protein KIF1A (Rattus norvegicus (Rat)).